The sequence spans 199 residues: Putative acetyltransferase SACOL2570 (199 aa).

This sequence belongs to the transferase hexapeptide repeat family.

This is Putative acetyltransferase SACOL2570 from Staphylococcus aureus (strain COL).